The primary structure comprises 499 residues: Lysine--tRNA ligase (499 aa).

Residues E407 and E414 each coordinate Mg(2+).

This sequence belongs to the class-II aminoacyl-tRNA synthetase family. As to quaternary structure, homodimer. Mg(2+) serves as cofactor.

The protein resides in the cytoplasm. The catalysed reaction is tRNA(Lys) + L-lysine + ATP = L-lysyl-tRNA(Lys) + AMP + diphosphate. This chain is Lysine--tRNA ligase, found in Lactiplantibacillus plantarum (strain ATCC BAA-793 / NCIMB 8826 / WCFS1) (Lactobacillus plantarum).